Consider the following 465-residue polypeptide: Pancreatic triacylglycerol lipase (465 aa).

An N-terminal signal peptide occupies residues 1-16 (MLLLWALPLLLGAVAG). Intrachain disulfides connect C20–C26 and C108–C119. The active-site Nucleophile is S170. Residue D194 is the Charge relay system of the active site. The Ca(2+) site is built by E205, R208, D210, and D213. C255 and C279 are oxidised to a cystine. Catalysis depends on H281, which acts as the Charge relay system. 3 disulfide bridges follow: C303–C314, C317–C321, and C449–C465. The PLAT domain occupies 355-465 (WRYQVAVTLS…EDILLTLTPC (111 aa)).

It belongs to the AB hydrolase superfamily. Lipase family. As to quaternary structure, forms a 1:1 stoichiometric complex with (pro)colipase/CLPS.

The protein resides in the secreted. The catalysed reaction is a triacylglycerol + H2O = a diacylglycerol + a fatty acid + H(+). It catalyses the reaction 1,2,3-tributanoylglycerol + H2O = dibutanoylglycerol + butanoate + H(+). The enzyme catalyses 1,2,3-tri-(9Z-octadecenoyl)-glycerol + H2O = di-(9Z)-octadecenoylglycerol + (9Z)-octadecenoate + H(+). It carries out the reaction all-trans-retinyl hexadecanoate + H2O = all-trans-retinol + hexadecanoate + H(+). The catalysed reaction is 1,2-di-(9Z-octadecenoyl)-glycerol + H2O = (9Z-octadecenoyl)-glycerol + (9Z)-octadecenoate + H(+). Its activity is regulated as follows. Inhibited by bile salts, is reactivated by (pro)colipase/CLPS. Plays an important role in fat metabolism. It preferentially splits the esters of long-chain fatty acids at positions 1 and 3, producing mainly 2-monoacylglycerol and free fatty acids, and shows considerably higher activity against insoluble emulsified substrates than against soluble ones. The chain is Pancreatic triacylglycerol lipase (PNLIP) from Oryctolagus cuniculus (Rabbit).